A 529-amino-acid chain; its full sequence is MQQRRPVRRALLSVSDKAGIIEFAQALSARGVELLSTGGTARLLAEKGLAVTEVSDYTGFPEMMDGRVKTLHPKVHGGILGRRGQDDAIMEQHHIAPIDMVVVNLYPFAETVAREGCSLEDAVENIDIGGPTMVRSAAKNHKDVAIVVKSSDYDAIIKEMDANEGSLTLDTRFDLAIKAFEHTAAYDSMIANYFGSMVPAYHGESKEAAGRFPRTLNLNFIKKQDMRYGENSHQQAAFYIEENVKEASVATAQQVQGKALSYNNIADTDAALECVKEFNEPACVIVKHANPCGVAVSTTILDAYDRAYKTDPTSAFGGIIAFNRELDAETAQAIISRQFVEVIIAPSATEDALKITAAKQNVRVLTCGQWAQRVPGLDFKRVNGGLLVQDRDLGMVSEAELRVVSKRQPTEQELRDALFCWKVAKFVKSNAIVYAKENMTIGIGAGQMSRVYSAKIAGIKAADEGLEVKGSAMASDAFFPFRDGIDAAAAVGVSCVIQPGGSIRDDEVIAAADEHGIAMIFTDMRHFRH.

Residues 1-148 enclose the MGS-like domain; it reads MQQRRPVRRA…KNHKDVAIVV (148 aa).

This sequence belongs to the PurH family.

The enzyme catalyses (6R)-10-formyltetrahydrofolate + 5-amino-1-(5-phospho-beta-D-ribosyl)imidazole-4-carboxamide = 5-formamido-1-(5-phospho-D-ribosyl)imidazole-4-carboxamide + (6S)-5,6,7,8-tetrahydrofolate. It carries out the reaction IMP + H2O = 5-formamido-1-(5-phospho-D-ribosyl)imidazole-4-carboxamide. It functions in the pathway purine metabolism; IMP biosynthesis via de novo pathway; 5-formamido-1-(5-phospho-D-ribosyl)imidazole-4-carboxamide from 5-amino-1-(5-phospho-D-ribosyl)imidazole-4-carboxamide (10-formyl THF route): step 1/1. Its pathway is purine metabolism; IMP biosynthesis via de novo pathway; IMP from 5-formamido-1-(5-phospho-D-ribosyl)imidazole-4-carboxamide: step 1/1. The sequence is that of Bifunctional purine biosynthesis protein PurH from Salmonella dublin (strain CT_02021853).